We begin with the raw amino-acid sequence, 261 residues long: Probable membrane transporter protein ORF9 (261 aa).

Transmembrane regions (helical) follow at residues 8–28 (LLAF…IAGG), 29–49 (GGMI…QTLG), 78–98 (LPMA…ATIV), 100–120 (GDVL…YFGL), 133–151 (VTPF…FYDG), 152–171 (VFGP…LAGF), 189–209 (VGAF…GLLM), and 231–251 (IIKP…LADP).

This sequence belongs to the 4-toluene sulfonate uptake permease (TSUP) (TC 2.A.102) family.

The protein localises to the cell membrane. The chain is Probable membrane transporter protein ORF9 from Sinorhizobium sp.